The sequence spans 311 residues: CID domain-containing protein 1 (311 aa).

The CID domain occupies 1-134 (MSDFTEQTLR…RLQEAHQQMK (134 aa)). Residues 224 to 256 (MLEDYVKRLKEETKERESLETNLNMLIQNVRMS) adopt a coiled-coil conformation.

This is CID domain-containing protein 1 (cids-1) from Caenorhabditis briggsae.